The sequence spans 988 residues: Next to BRCA1 gene 1 protein (988 aa).

One can recognise a PB1 domain in the interval 4-86; sequence QVTLNVTFKN…NQLQMQVHEG (83 aa). The residue at position 117 (S117) is a Phosphoserine. The tract at residues 126 to 150 is disordered; sequence MKTTEEPAPEQCSSAPCDTDQPQDK. Residues 213–265 form a ZZ-type zinc finger; sequence SWHIACSHCQKRIVGVRYQCSLCPSYNICEDCEAGPYTHDTNHVLLKLRRPVV. Positions 218, 221, 232, 235, 241, 244, 251, and 255 each coordinate Zn(2+). ATG8 family proteins-binding regions lie at residues 543-637 and 745-756; these read ASER…PASV and ASSEDYIIILPE. Position 587 is a phosphothreonine (T587). Phosphoserine occurs at positions 591, 597, and 626. Residues 611-644 form a disordered region; sequence ESEGAGFKAPPDSTVSAKRKAETPASVEETEEDL. Disordered regions lie at residues 768–822 and 841–900; these read MYSS…TSQP and RSAP…HHNG. A compositionally biased stretch (basic and acidic residues) spans 795-807; sequence TEARERLPERESQ. Positions 808–822 are enriched in polar residues; the sequence is PQEQSISDILTTSQP. Residue S860 is modified to Phosphoserine. The region spanning 935–979 is the UBA domain; it reads SEDQTTALMAHLFEMGFCDRQLNLRLLRKHNYNILQVVTELLQVN.

As to quaternary structure, homooligomer and heterooligomer. Interacts with TRIM55. Interacts with titin/TTN. Interacts with RNF29, USP8, MAP1LC3A, MAP1LC3B, MAP1LC3C, GABARAP, GABARAPL1 and GABARAPL2. Binds to ubiquitin and ubiquitinated proteins. Interacts with SQSTM1. Interacts with TAX1BP1. Interacts with IRF3; this interaction mediates autophagic degradation of IRF3. Interacts with IL12A and IL12B. Post-translationally, phosphorylated by GSK3A; this phosphorylation inhibits NBR1 involvement in the formation of ubiquitinated protein aggregates. Expressed in brain.

It localises to the cytoplasm. Its subcellular location is the cytoplasmic vesicle. It is found in the autophagosome. The protein localises to the lysosome. The protein resides in the myofibril. It localises to the sarcomere. Its subcellular location is the m line. In terms of biological role, ubiquitin-binding autophagy adapter that participates in different processes including host defense or intracellular homeostasis. Possesses a double function during the selective autophagy by acting as a shuttle bringing ubiquitinated proteins to autophagosomes and also by participating in the formation of protein aggregates. Plays a role in the regulation of the innate immune response by modulating type I interferon production and targeting ubiquitinated IRF3 for autophagic degradation. In response to oxidative stress, promotes an increase in SQSTM1 levels, phosphorylation, and body formation by preventing its autophagic degradation. In turn, activates the KEAP1-NRF2/NFE2L2 antioxidant pathway. Also plays non-autophagy role by mediating the shuttle of IL-12 to late endosome for subsequent secretion. This is Next to BRCA1 gene 1 protein (Nbr1) from Mus musculus (Mouse).